A 1391-amino-acid chain; its full sequence is DNA-directed RNA polymerase subunit beta (1391 aa).

This sequence belongs to the RNA polymerase beta chain family. In terms of assembly, the RNAP catalytic core consists of 2 alpha, 1 beta, 1 beta' and 1 omega subunit. When a sigma factor is associated with the core the holoenzyme is formed, which can initiate transcription.

It carries out the reaction RNA(n) + a ribonucleoside 5'-triphosphate = RNA(n+1) + diphosphate. Functionally, DNA-dependent RNA polymerase catalyzes the transcription of DNA into RNA using the four ribonucleoside triphosphates as substrates. The polypeptide is DNA-directed RNA polymerase subunit beta (Mycoplasma pneumoniae (strain ATCC 29342 / M129 / Subtype 1) (Mycoplasmoides pneumoniae)).